Reading from the N-terminus, the 89-residue chain is Small ribosomal subunit protein uS14 (89 aa).

The protein belongs to the universal ribosomal protein uS14 family. Part of the 30S ribosomal subunit. Contacts proteins S3 and S10.

Binds 16S rRNA, required for the assembly of 30S particles and may also be responsible for determining the conformation of the 16S rRNA at the A site. The polypeptide is Small ribosomal subunit protein uS14 (Chlorobium luteolum (strain DSM 273 / BCRC 81028 / 2530) (Pelodictyon luteolum)).